The chain runs to 432 residues: ATP-dependent RNA helicase RhlB (432 aa).

A Q motif motif is present at residues 9 to 37; the sequence is QRFADLPLHAEVIQALNENGFEFCTPIQA. Residues 40–219 enclose the Helicase ATP-binding domain; that stretch reads LPVLLKAKDI…YDHMNDPEKV (180 aa). Residue 53–60 coordinates ATP; the sequence is AQTGTGKT. Positions 165–168 match the DEAD box motif; the sequence is DEAD. Positions 243–390 constitute a Helicase C-terminal domain; sequence KMRLLLTLME…VSRYDREALL (148 aa). The disordered stretch occupies residues 395–432; sequence TPVKIHRKHPTSRTRDGAKGAHRSGGARPPRHRTRRPS. A compositionally biased stretch (basic residues) spans 423-432; that stretch reads PPRHRTRRPS.

Belongs to the DEAD box helicase family. RhlB subfamily. Component of the RNA degradosome, which is a multiprotein complex involved in RNA processing and mRNA degradation.

It localises to the cytoplasm. It catalyses the reaction ATP + H2O = ADP + phosphate + H(+). Functionally, DEAD-box RNA helicase involved in RNA degradation. Has RNA-dependent ATPase activity and unwinds double-stranded RNA. The polypeptide is ATP-dependent RNA helicase RhlB (Shewanella denitrificans (strain OS217 / ATCC BAA-1090 / DSM 15013)).